Reading from the N-terminus, the 394-residue chain is Elongation factor Tu (394 aa).

The 195-residue stretch at 10-204 (KPHINVGTIG…HLDNYIPEPK (195 aa)) folds into the tr-type G domain. The tract at residues 19–26 (GHVDHGKT) is G1. 19–26 (GHVDHGKT) contributes to the GTP binding site. T26 lines the Mg(2+) pocket. The tract at residues 60–64 (GITIN) is G2. Residues 81–84 (DCPG) are G3. GTP-binding positions include 81-85 (DCPGH) and 136-139 (NKCD). A G4 region spans residues 136 to 139 (NKCD). The tract at residues 174–176 (SAL) is G5.

This sequence belongs to the TRAFAC class translation factor GTPase superfamily. Classic translation factor GTPase family. EF-Tu/EF-1A subfamily. As to quaternary structure, monomer.

The protein localises to the cytoplasm. The catalysed reaction is GTP + H2O = GDP + phosphate + H(+). Its function is as follows. GTP hydrolase that promotes the GTP-dependent binding of aminoacyl-tRNA to the A-site of ribosomes during protein biosynthesis. The polypeptide is Elongation factor Tu (Wigglesworthia glossinidia brevipalpis).